A 226-amino-acid polypeptide reads, in one-letter code: MNENLFASFTTPTMMGLPIVILIIMFPSILFPSPNRLINNRLVSLQQWLVQLTSKQMLAIHNHKGQTWALMLMSLILFIGSTNLLGLLPHSFTPTTQLSMNLGMAIPLWAGTVITGFRHKTKASLAHFLPQGTPVPLIPMLVVIETISLFIQPMALAVRLTANITAGHLLMHLIGGAALALMNISTSIALITFTILILLTILEFAVALIQAYVFTLLVSLYLHDNT.

6 helical membrane-spanning segments follow: residues 12–32 (PTMMGLPIVILIIMFPSILFP), 68–88 (WALMLMSLILFIGSTNLLGLL), 97–117 (QLSMNLGMAIPLWAGTVITGF), 138–158 (IPMLVVIETISLFIQPMALAV), 164–184 (ITAGHLLMHLIGGAALALMNI), and 200–222 (TILEFAVALIQAYVFTLLVSLYL).

The protein belongs to the ATPase A chain family. Component of the ATP synthase complex composed at least of ATP5F1A/subunit alpha, ATP5F1B/subunit beta, ATP5MC1/subunit c (homooctomer), MT-ATP6/subunit a, MT-ATP8/subunit 8, ATP5ME/subunit e, ATP5MF/subunit f, ATP5MG/subunit g, ATP5MK/subunit k, ATP5MJ/subunit j, ATP5F1C/subunit gamma, ATP5F1D/subunit delta, ATP5F1E/subunit epsilon, ATP5PF/subunit F6, ATP5PB/subunit b, ATP5PD/subunit d, ATP5PO/subunit OSCP. ATP synthase complex consists of a soluble F(1) head domain (subunits alpha(3) and beta(3)) - the catalytic core - and a membrane F(0) domain - the membrane proton channel (subunits c, a, 8, e, f, g, k and j). These two domains are linked by a central stalk (subunits gamma, delta, and epsilon) rotating inside the F1 region and a stationary peripheral stalk (subunits F6, b, d, and OSCP). Interacts with DNAJC30; interaction is direct.

It is found in the mitochondrion inner membrane. The enzyme catalyses H(+)(in) = H(+)(out). Its function is as follows. Subunit a, of the mitochondrial membrane ATP synthase complex (F(1)F(0) ATP synthase or Complex V) that produces ATP from ADP in the presence of a proton gradient across the membrane which is generated by electron transport complexes of the respiratory chain. ATP synthase complex consist of a soluble F(1) head domain - the catalytic core - and a membrane F(1) domain - the membrane proton channel. These two domains are linked by a central stalk rotating inside the F(1) region and a stationary peripheral stalk. During catalysis, ATP synthesis in the catalytic domain of F(1) is coupled via a rotary mechanism of the central stalk subunits to proton translocation. With the subunit c (ATP5MC1), forms the proton-conducting channel in the F(0) domain, that contains two crucial half-channels (inlet and outlet) that facilitate proton movement from the mitochondrial intermembrane space (IMS) into the matrix. Protons are taken up via the inlet half-channel and released through the outlet half-channel, following a Grotthuss mechanism. This is ATP synthase F(0) complex subunit a from Felis catus (Cat).